A 556-amino-acid polypeptide reads, in one-letter code: Glucose-6-phosphate isomerase (556 aa).

Glu-360 (proton donor) is an active-site residue. Residues His-391 and Lys-519 contribute to the active site.

This sequence belongs to the GPI family.

It is found in the cytoplasm. It catalyses the reaction alpha-D-glucose 6-phosphate = beta-D-fructose 6-phosphate. The protein operates within carbohydrate biosynthesis; gluconeogenesis. Its pathway is carbohydrate degradation; glycolysis; D-glyceraldehyde 3-phosphate and glycerone phosphate from D-glucose: step 2/4. Catalyzes the reversible isomerization of glucose-6-phosphate to fructose-6-phosphate. This chain is Glucose-6-phosphate isomerase, found in Acinetobacter baumannii (strain SDF).